The chain runs to 582 residues: Putative frv operon regulatory protein (582 aa).

Positions 20–39 (PGELAQQTGVSGRTILRDID) form a DNA-binding region, H-T-H motif. Positions 443-582 (RFFSAPGSFH…EAFMELLHKG (140 aa)) constitute a PTS EIIA type-2 domain. H505 carries the post-translational modification Phosphohistidine; by HPr.

Could be involved in the regulation of the transcription of the FRV operon. This chain is Putative frv operon regulatory protein (frvR), found in Escherichia coli (strain K12).